Here is a 270-residue protein sequence, read N- to C-terminus: Glucosamine-6-phosphate deaminase (270 aa).

The active-site Proton acceptor; for enolization step is aspartate 72. Aspartate 141 acts as the For ring-opening step in catalysis. Histidine 143 acts as the Proton acceptor; for ring-opening step in catalysis. Glutamate 148 acts as the For ring-opening step in catalysis.

Belongs to the glucosamine/galactosamine-6-phosphate isomerase family. NagB subfamily.

It catalyses the reaction alpha-D-glucosamine 6-phosphate + H2O = beta-D-fructose 6-phosphate + NH4(+). It participates in amino-sugar metabolism; N-acetylneuraminate degradation; D-fructose 6-phosphate from N-acetylneuraminate: step 5/5. Its activity is regulated as follows. Allosterically activated by N-acetylglucosamine 6-phosphate (GlcNAc6P). Functionally, catalyzes the reversible isomerization-deamination of glucosamine 6-phosphate (GlcN6P) to form fructose 6-phosphate (Fru6P) and ammonium ion. The protein is Glucosamine-6-phosphate deaminase of Treponema denticola (strain ATCC 35405 / DSM 14222 / CIP 103919 / JCM 8153 / KCTC 15104).